A 547-amino-acid polypeptide reads, in one-letter code: Inositol 1,4,5-trisphosphate receptor-interacting protein (547 aa).

Positions 1-15 are cleaved as a signal peptide; sequence MAMGLFRVCLVVVTA. At 16 to 83 the chain is on the extracellular side; the sequence is IINHPLLFPR…EEGRQQNETR (68 aa). Residues asparagine 27 and asparagine 80 are each glycosylated (N-linked (GlcNAc...) asparagine). Residues 32 to 82 are a coiled coil; it reads ENEEEIIRKMQAHQEKLQLEQLRLEEEVARLAAEKEALEQVAEEGRQQNET. The chain crosses the membrane as a helical span at residues 84-100; sequence VAWDLWSTLCMILFLMI. Residues 101 to 547 lie on the Cytoplasmic side of the membrane; that stretch reads EVWRQDHQEG…VPSDQPTPKS (447 aa). A disordered region spans residues 109–129; the sequence is EGPSPECLGGEEDELPGLGGA. The residue at position 547 (serine 547) is a Phosphoserine.

The protein belongs to the ITPRIP family. As to quaternary structure, interacts with ITPR. Detected in brain where it is concentrated in cerebellar Purkinje cells (at protein level).

The protein resides in the cell membrane. The protein localises to the nucleus outer membrane. In terms of biological role, enhances Ca(2+)-mediated inhibition of inositol 1,4,5-triphosphate receptor (ITPR) Ca(2+) release. The chain is Inositol 1,4,5-trisphosphate receptor-interacting protein (ITPRIP) from Homo sapiens (Human).